Consider the following 151-residue polypeptide: Superoxide dismutase [Cu-Zn] (151 aa).

Cys-6 carries the S-palmitoyl cysteine lipid modification. Positions 45, 47, and 62 each coordinate Cu cation. Cys-56 and Cys-144 are joined by a disulfide. Zn(2+) is bound by residues His-62, His-70, His-79, and Asp-82. His-118 serves as a coordination point for Cu cation.

It belongs to the Cu-Zn superoxide dismutase family. As to quaternary structure, homodimer. Cu cation serves as cofactor. The cofactor is Zn(2+).

Its subcellular location is the cytoplasm. It localises to the nucleus. The enzyme catalyses 2 superoxide + 2 H(+) = H2O2 + O2. Destroys radicals which are normally produced within the cells and which are toxic to biological systems. In Xenopus tropicalis (Western clawed frog), this protein is Superoxide dismutase [Cu-Zn] (sod1).